A 169-amino-acid chain; its full sequence is Shikimate kinase (169 aa).

13 to 18 (GAGKST) contributes to the ATP binding site. Ser-17 serves as a coordination point for Mg(2+). 3 residues coordinate substrate: Asp-35, Arg-59, and Gly-80. Arg-117 lines the ATP pocket. Arg-136 is a substrate binding site. Arg-153 is a binding site for ATP.

Belongs to the shikimate kinase family. Monomer. Requires Mg(2+) as cofactor.

Its subcellular location is the cytoplasm. It carries out the reaction shikimate + ATP = 3-phosphoshikimate + ADP + H(+). It functions in the pathway metabolic intermediate biosynthesis; chorismate biosynthesis; chorismate from D-erythrose 4-phosphate and phosphoenolpyruvate: step 5/7. Its function is as follows. Catalyzes the specific phosphorylation of the 3-hydroxyl group of shikimic acid using ATP as a cosubstrate. This Corynebacterium efficiens (strain DSM 44549 / YS-314 / AJ 12310 / JCM 11189 / NBRC 100395) protein is Shikimate kinase.